The primary structure comprises 207 residues: Guanylate kinase (207 aa).

Residues 4-184 form the Guanylate kinase-like domain; that stretch reads GTLYIVSAPS…ALSDLKTIIR (181 aa). 11-18 provides a ligand contact to ATP; sequence APSGAGKS.

The protein belongs to the guanylate kinase family.

The protein resides in the cytoplasm. It catalyses the reaction GMP + ATP = GDP + ADP. Essential for recycling GMP and indirectly, cGMP. The chain is Guanylate kinase (gmk) from Salmonella typhimurium (strain LT2 / SGSC1412 / ATCC 700720).